Consider the following 167-residue polypeptide: 2-C-methyl-D-erythritol 2,4-cyclodiphosphate synthase (167 aa).

A divalent metal cation is bound by residues Asp-11 and His-13. Residues 11–13 and 37–38 each bind 4-CDP-2-C-methyl-D-erythritol 2-phosphate; these read DIH and HS. His-45 contributes to the a divalent metal cation binding site. Residues 59–61, 64–68, 103–109, and Arg-145 contribute to the 4-CDP-2-C-methyl-D-erythritol 2-phosphate site; these read DIG, FSDTD, and AQAPKMA.

It belongs to the IspF family. As to quaternary structure, homotrimer. Requires a divalent metal cation as cofactor.

It catalyses the reaction 4-CDP-2-C-methyl-D-erythritol 2-phosphate = 2-C-methyl-D-erythritol 2,4-cyclic diphosphate + CMP. The protein operates within isoprenoid biosynthesis; isopentenyl diphosphate biosynthesis via DXP pathway; isopentenyl diphosphate from 1-deoxy-D-xylulose 5-phosphate: step 4/6. In terms of biological role, involved in the biosynthesis of isopentenyl diphosphate (IPP) and dimethylallyl diphosphate (DMAPP), two major building blocks of isoprenoid compounds. Catalyzes the conversion of 4-diphosphocytidyl-2-C-methyl-D-erythritol 2-phosphate (CDP-ME2P) to 2-C-methyl-D-erythritol 2,4-cyclodiphosphate (ME-CPP) with a corresponding release of cytidine 5-monophosphate (CMP). This chain is 2-C-methyl-D-erythritol 2,4-cyclodiphosphate synthase, found in Nitrosomonas eutropha (strain DSM 101675 / C91 / Nm57).